A 645-amino-acid polypeptide reads, in one-letter code: Glucans biosynthesis glucosyltransferase H (645 aa).

The interval 1 to 28 (MDGTVTLSPAPTDLPPVSSLDAGQPTLP) is disordered. Helical transmembrane passes span 64 to 84 (LIGG…SVLW), 98 to 118 (LFVL…AGFI), 423 to 443 (APMW…GAGI), 465 to 485 (AIWI…LGYI), 504 to 524 (ALSI…VMYL), 558 to 578 (SYGG…LVSP), and 580 to 600 (LAAW…VVAV).

It belongs to the glycosyltransferase 2 family. OpgH subfamily.

Its subcellular location is the cell inner membrane. Its pathway is glycan metabolism; osmoregulated periplasmic glucan (OPG) biosynthesis. In terms of biological role, involved in the biosynthesis of osmoregulated periplasmic glucans (OPGs). This is Glucans biosynthesis glucosyltransferase H from Xanthomonas campestris pv. campestris (strain 8004).